A 381-amino-acid chain; its full sequence is cAMP-dependent protein kinase type I-alpha regulatory subunit (381 aa).

The residue at position 1 (M1) is an N-acetylmethionine. The residue at position 2 (A2) is an N-acetylalanine; in cAMP-dependent protein kinase type I-alpha regulatory subunit, N-terminally processed. The tract at residues 2 to 136 (ASGSMATSEE…ALAKAIEKNV (135 aa)) is dimerization and phosphorylation. Position 3 is a phosphoserine (S3). The disordered stretch occupies residues 73–96 (IRTDSREDEISPPPPNPVVKGRRR). T75 is subject to Phosphothreonine. A phosphoserine mark is found at S77 and S83. The short motif at 96-100 (RRGAI) is the Pseudophosphorylation motif element. S101 bears the Phosphoserine mark. Residues 137–254 (LFSH…SKVS), E202, R211, 255–381 (ILES…SLSV), E326, and R335 each bind 3',5'-cyclic AMP. S258 is subject to Phosphoserine.

The protein belongs to the cAMP-dependent kinase regulatory chain family. In terms of assembly, the inactive holoenzyme is composed of two regulatory chains and two catalytic chains. Activation by cAMP releases the two active catalytic monomers and the regulatory dimer. Interacts with PRKACA and PRKACB. PRKAR1A also interacts with RFC2; the complex may be involved in cell survival. Interacts with AKAP4. Interacts with RARA; the interaction occurs in the presence of cAMP or FSH and regulates RARA transcriptional activity. Interacts with the phosphorylated form of PJA2. Interacts with PRKX; regulates this cAMP-dependent protein kinase. Interacts with CBFA2T3. Interacts with smAKAP; this interaction may target PRKAR1A to the plasma membrane. Interacts with AICDA. The pseudophosphorylation site binds to the substrate-binding region of the catalytic chain, resulting in the inhibition of its activity.

It is found in the cell membrane. Regulatory subunit of the cAMP-dependent protein kinases involved in cAMP signaling in cells. This is cAMP-dependent protein kinase type I-alpha regulatory subunit (Prkar1a) from Mus musculus (Mouse).